The sequence spans 347 residues: GMP reductase (347 aa).

108–131 (ADFEKTVQILALNPALNFVCIDVA) is an NADP(+) binding site. K(+) is bound by residues glycine 181 and glycine 183. The Thioimidate intermediate role is filled by cysteine 186. 216–239 (IVSDGGCTMPGDVAKAFGGGADFV) contributes to the NADP(+) binding site.

Belongs to the IMPDH/GMPR family. GuaC type 1 subfamily. Homotetramer.

The enzyme catalyses IMP + NH4(+) + NADP(+) = GMP + NADPH + 2 H(+). Catalyzes the irreversible NADPH-dependent deamination of GMP to IMP. It functions in the conversion of nucleobase, nucleoside and nucleotide derivatives of G to A nucleotides, and in maintaining the intracellular balance of A and G nucleotides. In Salmonella paratyphi C (strain RKS4594), this protein is GMP reductase.